A 212-amino-acid polypeptide reads, in one-letter code: ATP phosphoribosyltransferase (212 aa).

Belongs to the ATP phosphoribosyltransferase family. Short subfamily. Heteromultimer composed of HisG and HisZ subunits.

The protein localises to the cytoplasm. It carries out the reaction 1-(5-phospho-beta-D-ribosyl)-ATP + diphosphate = 5-phospho-alpha-D-ribose 1-diphosphate + ATP. Its pathway is amino-acid biosynthesis; L-histidine biosynthesis; L-histidine from 5-phospho-alpha-D-ribose 1-diphosphate: step 1/9. Its function is as follows. Catalyzes the condensation of ATP and 5-phosphoribose 1-diphosphate to form N'-(5'-phosphoribosyl)-ATP (PR-ATP). Has a crucial role in the pathway because the rate of histidine biosynthesis seems to be controlled primarily by regulation of HisG enzymatic activity. This is ATP phosphoribosyltransferase from Citrifermentans bemidjiense (strain ATCC BAA-1014 / DSM 16622 / JCM 12645 / Bem) (Geobacter bemidjiensis).